The sequence spans 198 residues: uncharacterized protein (198 aa).

The tract at residues M1–T23 is disordered. Over residues S9–T23 the composition is skewed to polar residues. Mo-molybdopterin contacts are provided by C75, H144, and R149.

Mo-molybdopterin is required as a cofactor.

This is an uncharacterized protein from Bacillus subtilis (strain 168).